A 418-amino-acid polypeptide reads, in one-letter code: Probable carboxypeptidase AFLA_000940 (418 aa).

Positions 1–18 are cleaved as a signal peptide; that stretch reads MKATDLFHVTVLVAGALA. N-linked (GlcNAc...) asparagine glycosylation is present at asparagine 74. Aspartate 147 lines the Zn(2+) pocket. Residue asparagine 168 is glycosylated (N-linked (GlcNAc...) asparagine). Catalysis depends on glutamate 179, which acts as the Proton acceptor. Glutamate 180 contributes to the Zn(2+) binding site.

It belongs to the peptidase M20A family. Requires Zn(2+) as cofactor.

It is found in the secreted. This is Probable carboxypeptidase AFLA_000940 from Aspergillus flavus (strain ATCC 200026 / FGSC A1120 / IAM 13836 / NRRL 3357 / JCM 12722 / SRRC 167).